The primary structure comprises 328 residues: GMP reductase (328 aa).

Cysteine 177 functions as the Thioimidate intermediate in the catalytic mechanism. 206–229 (IVADGGIRYNGDIAKSIRFGASMV) provides a ligand contact to NADP(+).

The protein belongs to the IMPDH/GMPR family. GuaC type 2 subfamily.

The catalysed reaction is IMP + NH4(+) + NADP(+) = GMP + NADPH + 2 H(+). Functionally, catalyzes the irreversible NADPH-dependent deamination of GMP to IMP. It functions in the conversion of nucleobase, nucleoside and nucleotide derivatives of G to A nucleotides, and in maintaining the intracellular balance of A and G nucleotides. The polypeptide is GMP reductase (Levilactobacillus brevis (strain ATCC 367 / BCRC 12310 / CIP 105137 / JCM 1170 / LMG 11437 / NCIMB 947 / NCTC 947) (Lactobacillus brevis)).